Consider the following 188-residue polypeptide: Heparin-binding hemagglutinin homolog (188 aa).

Positions Lys-162–Lys-188 are disordered. Residues Ala-170–Lys-188 are compositionally biased toward basic residues.

It to M.tuberculosis HbhA.

In terms of biological role, might mediate adherence to host cells by binding sulfated glycoconjugates. The polypeptide is Heparin-binding hemagglutinin homolog (hbhA) (Mycobacterium leprae (strain TN)).